A 428-amino-acid chain; its full sequence is Flotillin-1 (428 aa).

Phosphoserine occurs at positions 19, 163, and 385. Thr387 carries the phosphothreonine modification.

It belongs to the band 7/mec-2 family. Flotillin subfamily. In terms of assembly, heterooligomeric complex of flotillin-1 and flotillin-2 and caveolin-1 and caveolin-2. Interacts with ECPAS. High expression in brain, white adipose tissue, heart muscle, skeletal muscle and lung. Low expression in spleen, liver and testis.

The protein resides in the cell membrane. The protein localises to the endosome. It is found in the membrane. Its subcellular location is the caveola. It localises to the melanosome. The protein resides in the membrane raft. Its function is as follows. May act as a scaffolding protein within caveolar membranes, functionally participating in formation of caveolae or caveolae-like vesicles. The sequence is that of Flotillin-1 (Flot1) from Mus musculus (Mouse).